Consider the following 196-residue polypeptide: Pyridoxine/pyridoxamine 5'-phosphate oxidase (196 aa).

Residues 46-51 (RNVLYK), 61-62 (FT), Arg67, Lys68, and Gln90 contribute to the FMN site. Substrate is bound at residue Lys51. The substrate site is built by Tyr108, Arg112, and Ser116. FMN-binding positions include 125 to 126 (QS) and Trp169. 175–177 (RLH) serves as a coordination point for substrate. Arg179 lines the FMN pocket.

It belongs to the pyridoxamine 5'-phosphate oxidase family. In terms of assembly, homodimer. The cofactor is FMN.

It catalyses the reaction pyridoxamine 5'-phosphate + O2 + H2O = pyridoxal 5'-phosphate + H2O2 + NH4(+). The enzyme catalyses pyridoxine 5'-phosphate + O2 = pyridoxal 5'-phosphate + H2O2. Its pathway is cofactor metabolism; pyridoxal 5'-phosphate salvage; pyridoxal 5'-phosphate from pyridoxamine 5'-phosphate: step 1/1. It participates in cofactor metabolism; pyridoxal 5'-phosphate salvage; pyridoxal 5'-phosphate from pyridoxine 5'-phosphate: step 1/1. In terms of biological role, catalyzes the oxidation of either pyridoxine 5'-phosphate (PNP) or pyridoxamine 5'-phosphate (PMP) into pyridoxal 5'-phosphate (PLP). In Coxiella burnetii (strain RSA 493 / Nine Mile phase I), this protein is Pyridoxine/pyridoxamine 5'-phosphate oxidase.